The chain runs to 378 residues: Erythronate-4-phosphate dehydrogenase (378 aa).

The substrate site is built by Ser-45 and Thr-66. NAD(+) is bound by residues Asp-146 and Thr-175. Arg-208 is a catalytic residue. Asp-232 contacts NAD(+). The active site involves Glu-237. His-254 (proton donor) is an active-site residue. Residue Gly-257 participates in NAD(+) binding. Tyr-258 serves as a coordination point for substrate.

Belongs to the D-isomer specific 2-hydroxyacid dehydrogenase family. PdxB subfamily. As to quaternary structure, homodimer.

The protein resides in the cytoplasm. The catalysed reaction is 4-phospho-D-erythronate + NAD(+) = (R)-3-hydroxy-2-oxo-4-phosphooxybutanoate + NADH + H(+). It participates in cofactor biosynthesis; pyridoxine 5'-phosphate biosynthesis; pyridoxine 5'-phosphate from D-erythrose 4-phosphate: step 2/5. Catalyzes the oxidation of erythronate-4-phosphate to 3-hydroxy-2-oxo-4-phosphonooxybutanoate. The sequence is that of Erythronate-4-phosphate dehydrogenase from Escherichia coli O45:K1 (strain S88 / ExPEC).